We begin with the raw amino-acid sequence, 258 residues long: Thiazole synthase 1 (258 aa).

Lys97 (schiff-base intermediate with DXP) is an active-site residue. 1-deoxy-D-xylulose 5-phosphate-binding positions include Gly158, 184–185 (AG), and 206–207 (NT).

This sequence belongs to the ThiG family. In terms of assembly, homotetramer. Forms heterodimers with either ThiH or ThiS.

The protein localises to the cytoplasm. It carries out the reaction [ThiS sulfur-carrier protein]-C-terminal-Gly-aminoethanethioate + 2-iminoacetate + 1-deoxy-D-xylulose 5-phosphate = [ThiS sulfur-carrier protein]-C-terminal Gly-Gly + 2-[(2R,5Z)-2-carboxy-4-methylthiazol-5(2H)-ylidene]ethyl phosphate + 2 H2O + H(+). It functions in the pathway cofactor biosynthesis; thiamine diphosphate biosynthesis. Catalyzes the rearrangement of 1-deoxy-D-xylulose 5-phosphate (DXP) to produce the thiazole phosphate moiety of thiamine. Sulfur is provided by the thiocarboxylate moiety of the carrier protein ThiS. In vitro, sulfur can be provided by H(2)S. The chain is Thiazole synthase 1 from Syntrophotalea carbinolica (strain DSM 2380 / NBRC 103641 / GraBd1) (Pelobacter carbinolicus).